The primary structure comprises 329 residues: Prostaglandin reductase 1 (329 aa).

Thr-18 bears the Phosphothreonine mark. A Phosphoserine modification is found at Ser-20. NADP(+)-binding positions include 152 to 155, Lys-178, Tyr-193, Asn-217, 239 to 245, 270 to 272, and Asn-321; these read GAVG, CGAISVY, and FVV. Residue Lys-178 is modified to N6-(2-hydroxyisobutyryl)lysine; alternate. Lys-178 is subject to N6-acetyllysine; alternate.

The protein belongs to the NADP-dependent oxidoreductase L4BD family. Monomer or homodimer.

Its subcellular location is the cytoplasm. The catalysed reaction is 13,14-dihydro-15-oxo-prostaglandin E1 + NADP(+) = 15-oxoprostaglandin E1 + NADPH + H(+). It catalyses the reaction 13,14-dihydro-15-oxo-prostaglandin E2 + NADP(+) = 15-oxoprostaglandin E2 + NADPH + H(+). The enzyme catalyses 13,14-dihydro-15-oxo-prostaglandin F1alpha + NADP(+) = 15-oxoprostaglandin F1alpha + NADPH + H(+). It carries out the reaction 13,14-dihydro-15-oxo-PGF2alpha + NADP(+) = 15-oxoprostaglandin F2alpha + NADPH + H(+). The catalysed reaction is leukotriene B4 + NADP(+) = 12-oxo-leukotriene B4 + NADPH + H(+). It catalyses the reaction 20-hydroxy-leukotriene B4 + NADP(+) = 12-oxo-20-hydroxy-leukotriene B4 + NADPH + H(+). The enzyme catalyses 6-trans-leukotriene B4 + NADP(+) = 12-oxo-(5S)-hydroxy-(6E,8E,10E,14Z)-eicosatetraenoate + NADPH + H(+). It carries out the reaction (5S,12S)-dihydroxy-(6E,10E,12E,14Z)-eicosatetraenoate + NADP(+) = 12-oxo-(5S)-hydroxy-(6E,8E,10E,14Z)-eicosatetraenoate + NADPH + H(+). The catalysed reaction is an n-alkanal + NADP(+) = an alk-2-enal + NADPH + H(+). It catalyses the reaction hexanal + NADP(+) = (E)-hex-2-enal + NADPH + H(+). The enzyme catalyses octanal + NADP(+) = (2E)-octenal + NADPH + H(+). It carries out the reaction decanal + NADP(+) = (2E)-decenal + NADPH + H(+). The catalysed reaction is dodecanal + NADP(+) = (2E)-dodecenal + NADPH + H(+). It catalyses the reaction 4-hydroxynonanal + NADP(+) = (E)-4-hydroxynon-2-enal + NADPH + H(+). The enzyme catalyses pentan-2-one + NADP(+) = (E)-pent-3-en-2-one + NADPH + H(+). It carries out the reaction nonan-2-one + NADP(+) = (3E)-nonen-2-one + NADPH + H(+). Functionally, NAD(P)H-dependent oxidoreductase involved in metabolic inactivation of pro- and anti-inflammatory eicosanoids: prostaglandins (PG), leukotrienes (LT) and lipoxins (LX). Catalyzes with high efficiency the reduction of the 13,14 double bond of 15-oxoPGs, including 15-oxo-PGE1, 15-oxo-PGE2, 15-oxo-PGF1-alpha and 15-oxo-PGF2-alpha. Catalyzes with lower efficiency the oxidation of the hydroxyl group at C12 of LTB4 and its derivatives, converting them into biologically less active 12-oxo-LTB4 metabolites. Reduces 15-oxo-LXA4 to 13,14 dihydro-15-oxo-LXA4, enhancing neutrophil recruitment at the inflammatory site. Plays a role in metabolic detoxification of alkenals and ketones. Reduces alpha,beta-unsaturated alkenals and ketones, particularly those with medium-chain length, showing highest affinity toward (2E)-decenal and (3E)-3-nonen-2-one. May inactivate 4-hydroxy-2-nonenal, a cytotoxic lipid constituent of oxidized low-density lipoprotein particles. The protein is Prostaglandin reductase 1 (PTGR1) of Bos taurus (Bovine).